The following is a 373-amino-acid chain: UDP-N-acetylglucosamine--N-acetylmuramyl-(pentapeptide) pyrophosphoryl-undecaprenol N-acetylglucosamine transferase (373 aa).

Residues 10–12 (TGG), asparagine 124, serine 195, and glutamine 297 each bind UDP-N-acetyl-alpha-D-glucosamine.

The protein belongs to the glycosyltransferase 28 family. MurG subfamily.

The protein resides in the cell membrane. The catalysed reaction is Mur2Ac(oyl-L-Ala-gamma-D-Glu-L-Lys-D-Ala-D-Ala)-di-trans,octa-cis-undecaprenyl diphosphate + UDP-N-acetyl-alpha-D-glucosamine = beta-D-GlcNAc-(1-&gt;4)-Mur2Ac(oyl-L-Ala-gamma-D-Glu-L-Lys-D-Ala-D-Ala)-di-trans,octa-cis-undecaprenyl diphosphate + UDP + H(+). The protein operates within cell wall biogenesis; peptidoglycan biosynthesis. Cell wall formation. Catalyzes the transfer of a GlcNAc subunit on undecaprenyl-pyrophosphoryl-MurNAc-pentapeptide (lipid intermediate I) to form undecaprenyl-pyrophosphoryl-MurNAc-(pentapeptide)GlcNAc (lipid intermediate II). This Oenococcus oeni (strain ATCC BAA-331 / PSU-1) protein is UDP-N-acetylglucosamine--N-acetylmuramyl-(pentapeptide) pyrophosphoryl-undecaprenol N-acetylglucosamine transferase.